Reading from the N-terminus, the 186-residue chain is Acireductone dioxygenase (186 aa).

Positions 89, 91, 95, and 134 each coordinate Fe(2+). Residues His-89, His-91, Glu-95, and His-134 each contribute to the Ni(2+) site.

It belongs to the acireductone dioxygenase (ARD) family. Fe(2+) is required as a cofactor. Requires Ni(2+) as cofactor.

It is found in the cytoplasm. The protein localises to the nucleus. The catalysed reaction is 1,2-dihydroxy-5-(methylsulfanyl)pent-1-en-3-one + O2 = 4-methylsulfanyl-2-oxobutanoate + formate + 2 H(+). The enzyme catalyses 1,2-dihydroxy-5-(methylsulfanyl)pent-1-en-3-one + O2 = 3-(methylsulfanyl)propanoate + CO + formate + 2 H(+). It functions in the pathway amino-acid biosynthesis; L-methionine biosynthesis via salvage pathway; L-methionine from S-methyl-5-thio-alpha-D-ribose 1-phosphate: step 5/6. Functionally, catalyzes 2 different reactions between oxygen and the acireductone 1,2-dihydroxy-3-keto-5-methylthiopentene (DHK-MTPene) depending upon the metal bound in the active site. Fe-containing acireductone dioxygenase (Fe-ARD) produces formate and 2-keto-4-methylthiobutyrate (KMTB), the alpha-ketoacid precursor of methionine in the methionine recycle pathway. Ni-containing acireductone dioxygenase (Ni-ARD) produces methylthiopropionate, carbon monoxide and formate, and does not lie on the methionine recycle pathway. This is Acireductone dioxygenase from Drosophila melanogaster (Fruit fly).